The following is a 304-amino-acid chain: tRNA dimethylallyltransferase (304 aa).

13–20 (GPTAAGKT) lines the ATP pocket. 15–20 (TAAGKT) contributes to the substrate binding site. Residues 38 to 41 (DSRQ) form an interaction with substrate tRNA region.

Belongs to the IPP transferase family. Monomer. The cofactor is Mg(2+).

It catalyses the reaction adenosine(37) in tRNA + dimethylallyl diphosphate = N(6)-dimethylallyladenosine(37) in tRNA + diphosphate. In terms of biological role, catalyzes the transfer of a dimethylallyl group onto the adenine at position 37 in tRNAs that read codons beginning with uridine, leading to the formation of N6-(dimethylallyl)adenosine (i(6)A). The protein is tRNA dimethylallyltransferase of Cytophaga hutchinsonii (strain ATCC 33406 / DSM 1761 / CIP 103989 / NBRC 15051 / NCIMB 9469 / D465).